Consider the following 833-residue polypeptide: Leucine--tRNA ligase (833 aa).

The 'HIGH' region motif lies at 41–52 (PYPSGAGLHVGH). Residues 610–614 (KMSKS) carry the 'KMSKS' region motif. Residue K613 coordinates ATP.

The protein belongs to the class-I aminoacyl-tRNA synthetase family.

It localises to the cytoplasm. The enzyme catalyses tRNA(Leu) + L-leucine + ATP = L-leucyl-tRNA(Leu) + AMP + diphosphate. In Streptococcus sanguinis (strain SK36), this protein is Leucine--tRNA ligase.